Reading from the N-terminus, the 155-residue chain is MQTEKPDPSTDPGRGRRLGLDVGTVRIGVAISDPDCILATPVETIQATADDADVQRVVEICRDNFVVEIVVGLPVALRGNHTQSTLNAEEFARLVKEELPDIPVRMVDERMSTMAATHAFHASGVNSKKGRKKIDQAAAVHILQGWLDTRRRALS.

Belongs to the YqgF nuclease family.

Its subcellular location is the cytoplasm. Could be a nuclease involved in processing of the 5'-end of pre-16S rRNA. The chain is Putative pre-16S rRNA nuclease from Corynebacterium jeikeium (strain K411).